The sequence spans 111 residues: UPF0339 protein BP0521 (111 aa).

2 repeat units span residues 9 to 57 (ASGT…RYQR) and 60 to 108 (AKDG…TKDQ). The interval 86-111 (TQARDNGIASVKSNAPGAPTKDQTQA) is disordered.

Belongs to the UPF0339 family. Duplicated subfamily.

The protein is UPF0339 protein BP0521 of Bordetella pertussis (strain Tohama I / ATCC BAA-589 / NCTC 13251).